Reading from the N-terminus, the 205-residue chain is MAQLYFYYSAMNAGKSTALLQSSYNYQERGMRTVVYTAEIDDRFGAGKVSSRIGLSSPAKLFNQNSSLFDEIRAEHEQQAIHCVLVDECQFLTRQQVYELSEVVDQLDIPVLCYGLRTDFRGELFIGSQYLLAWSDKLVELKTICFCGRKASMVLRLDQAGRPYNEGEQVVIGGNERYVSVCRKHYKEALQVGSLTAIQERHRHD.

ATP contacts are provided by residues 9–16 (SAMNAGKS) and 87–90 (DECQ). The active-site Proton acceptor is the E88. 4 residues coordinate Zn(2+): C145, C147, C182, and H185.

This sequence belongs to the thymidine kinase family. In terms of assembly, homotetramer.

The protein localises to the cytoplasm. It carries out the reaction thymidine + ATP = dTMP + ADP + H(+). With respect to regulation, allosteric enzyme which is feedback inhibited by dTTP and activated by a number of dNDP and dNTP. In terms of biological role, phosphorylates both thymidine and deoxyuridine. This Escherichia coli O157:H7 protein is Thymidine kinase.